The chain runs to 143 residues: Transcription antitermination protein NusB (143 aa).

The protein belongs to the NusB family.

Its function is as follows. Involved in transcription antitermination. Required for transcription of ribosomal RNA (rRNA) genes. Binds specifically to the boxA antiterminator sequence of the ribosomal RNA (rrn) operons. The protein is Transcription antitermination protein NusB of Desulforapulum autotrophicum (strain ATCC 43914 / DSM 3382 / VKM B-1955 / HRM2) (Desulfobacterium autotrophicum).